The following is a 119-amino-acid chain: Large ribosomal subunit protein uL18 (119 aa).

This sequence belongs to the universal ribosomal protein uL18 family. As to quaternary structure, part of the 50S ribosomal subunit; part of the 5S rRNA/L5/L18/L25 subcomplex. Contacts the 5S and 23S rRNAs.

Functionally, this is one of the proteins that bind and probably mediate the attachment of the 5S RNA into the large ribosomal subunit, where it forms part of the central protuberance. The sequence is that of Large ribosomal subunit protein uL18 from Staphylococcus aureus (strain bovine RF122 / ET3-1).